The chain runs to 242 residues: Ribosomal RNA small subunit methyltransferase G (242 aa).

Residues Gly79, 130–131 (VE), and Gln149 contribute to the S-adenosyl-L-methionine site.

This sequence belongs to the methyltransferase superfamily. RNA methyltransferase RsmG family.

Its subcellular location is the cytoplasm. Functionally, specifically methylates the N7 position of a guanine in 16S rRNA. The chain is Ribosomal RNA small subunit methyltransferase G from Mycoplasmoides gallisepticum (strain R(low / passage 15 / clone 2)) (Mycoplasma gallisepticum).